The sequence spans 249 residues: MTRYKAIISYDGHDFSGFQRQPHARTVQEEIEKTLVRLNSGQPVTVHGAGRTDAGVHAYGQVIHFDLAGSRDVEKLRFALDTQTSEDIDVVSVEQVADDFHCRYAKHSKTYEFLVDIGRPKNPMMRHYATFYPYDLDLSLIEEAIQDLVGTHDFTGFTASGTSVEDNVRTITVASMEYDQQRQFLIFTFSGNGFLYKQVRNMVGTLLKIGNGRMPVGQIKRILAEKDRGLAGPTAAGNGLYLKEIIYED.

Catalysis depends on Asp-53, which acts as the Nucleophile. Substrate is bound at residue Tyr-111.

This sequence belongs to the tRNA pseudouridine synthase TruA family. In terms of assembly, homodimer.

It carries out the reaction uridine(38/39/40) in tRNA = pseudouridine(38/39/40) in tRNA. Functionally, formation of pseudouridine at positions 38, 39 and 40 in the anticodon stem and loop of transfer RNAs. This is tRNA pseudouridine synthase A from Streptococcus suis (strain 05ZYH33).